The chain runs to 76 residues: Vasotab-TY2 (76 aa).

Positions Met1–Asp21 are cleaved as a signal peptide. A Kazal-like domain is found at Asp22–Lys76. 3 disulfides stabilise this stretch: Cys23–Cys60, Cys27–Cys53, and Cys35–Cys75.

In terms of tissue distribution, expressed by the salivary gland.

Its subcellular location is the secreted. In terms of biological role, vasodilator protein that inhibits vasoconstriction of isolated rat femoral artery induced by phenylephrine. Since platelet aggregation and vasoconstriction are key hemostatic responses, particularly in small wounds, this protein likely participates in the antihemostatic responses during blood feeding. Blocks L-type calcium channels (Cav1/CACNA1) in left ventricular myocytes isolated from rat hearts. This chain is Vasotab-TY2, found in Tabanus yao (Horsefly).